Reading from the N-terminus, the 265-residue chain is Thymidine kinase 2, mitochondrial (265 aa).

The transit peptide at 1-33 (MLLWPLRGWAARALRCFGPGSRGSPASGPGPRR) directs the protein to the mitochondrion. The span at 20 to 32 (GSRGSPASGPGPR) shows a compositional bias: low complexity. Residues 20-47 (GSRGSPASGPGPRRVQRRAWPPDKEQEK) form a disordered region. 57 to 65 (GNIASGKTT) is an ATP binding site. Glu-133 (proton acceptor) is an active-site residue.

Belongs to the DCK/DGK family. As to quaternary structure, monomer. Predominantly expressed in liver, pancreas, muscle, and brain.

Its subcellular location is the mitochondrion. It catalyses the reaction thymidine + ATP = dTMP + ADP + H(+). The catalysed reaction is 2'-deoxycytidine + ATP = dCMP + ADP + H(+). It carries out the reaction 2'-deoxyuridine + ATP = dUMP + ADP + H(+). Functionally, phosphorylates thymidine, deoxycytidine, and deoxyuridine in the mitochondrial matrix. In non-replicating cells, where cytosolic dNTP synthesis is down-regulated, mtDNA synthesis depends solely on TK2 and DGUOK. Widely used as target of antiviral and chemotherapeutic agents. This Homo sapiens (Human) protein is Thymidine kinase 2, mitochondrial.